The following is a 152-amino-acid chain: Large ribosomal subunit protein bL9 (152 aa).

Belongs to the bacterial ribosomal protein bL9 family.

Functionally, binds to the 23S rRNA. The protein is Large ribosomal subunit protein bL9 of Rippkaea orientalis (strain PCC 8801 / RF-1) (Cyanothece sp. (strain PCC 8801)).